A 393-amino-acid chain; its full sequence is Fasciculation and elongation protein zeta-1 (393 aa).

Residues 1–41 form a disordered region; it reads MEAPLVSLDEEFEDIRPCCTEDPEEKPQSLYGTSPHHLEDP. The residue at position 58 (Ser58) is a Phosphoserine. The tract at residues 130-154 is disordered; that stretch reads NGNSSDTEIHEKEEEDEFIEKSEND. The stretch at 231-299 forms a coiled coil; sequence SELTELLDQV…KKRRKEKGLS (69 aa). Phosphoserine is present on residues Ser299 and Ser317.

Belongs to the zygin family. Homodimer. Interacts with UBE4B and SAP30L. Interacts with SCOC and ULK1; SCOC interferes with ULK1-binding to FEZ1. Directly interacts with SCOC and UVRAG. Stabilizes the interaction between SCOC and UVRAG during amino acid starvation. Interacts with the NH2-terminal variable region (V1) of PKC zeta and weakly with that of PKC epsilon. Post-translationally, phosphorylated by protein kinase C zeta; which enhances interaction with UBE4B and polyubiquitination. Polyubiquitinated in a UBE4B-dependent manner; which does not lead to proteasomal degradation and may be important for neurogenic activity. Polyubiquitin linkage seems to be mainly through Lys-26. In terms of tissue distribution, brain.

It localises to the cytoplasm. It is found in the cytoskeleton. The protein localises to the microtubule organizing center. The protein resides in the centrosome. Its subcellular location is the cell membrane. May be involved in axonal outgrowth as component of the network of molecules that regulate cellular morphology and axon guidance machinery. May participate in the transport of mitochondria and other cargos along microtubules. The chain is Fasciculation and elongation protein zeta-1 (Fez1) from Rattus norvegicus (Rat).